A 237-amino-acid chain; its full sequence is Uridylate kinase (237 aa).

9–12 (KLSG) is an ATP binding site. Glycine 51 lines the UMP pocket. ATP is bound by residues glycine 52 and arginine 56. UMP is bound by residues aspartate 71 and 132-139 (CGNPFFTT). Residues threonine 159, tyrosine 165, and aspartate 168 each contribute to the ATP site.

Belongs to the UMP kinase family. In terms of assembly, homohexamer.

It localises to the cytoplasm. The enzyme catalyses UMP + ATP = UDP + ADP. The protein operates within pyrimidine metabolism; CTP biosynthesis via de novo pathway; UDP from UMP (UMPK route): step 1/1. With respect to regulation, inhibited by UTP. Its function is as follows. Catalyzes the reversible phosphorylation of UMP to UDP. The chain is Uridylate kinase from Prochlorococcus marinus (strain NATL1A).